The following is a 394-amino-acid chain: Phosphoglycerate kinase (394 aa).

Substrate is bound by residues 21–23 (DFN), Arg36, 59–62 (HLGR), Arg118, and Arg151. Ser183 bears the Phosphoserine mark. Lys201 contributes to the ATP binding site. Residue Thr299 is modified to Phosphothreonine. ATP contacts are provided by residues Glu323 and 350–353 (GGDS).

It belongs to the phosphoglycerate kinase family. Monomer.

Its subcellular location is the cytoplasm. The catalysed reaction is (2R)-3-phosphoglycerate + ATP = (2R)-3-phospho-glyceroyl phosphate + ADP. The protein operates within carbohydrate degradation; glycolysis; pyruvate from D-glyceraldehyde 3-phosphate: step 2/5. In Geobacillus sp. (strain WCH70), this protein is Phosphoglycerate kinase.